The sequence spans 146 residues: Hemoglobin subunit beta (146 aa).

N-acetylvaline is present on Val1. Residues 2–146 form the Globin domain; that stretch reads HLTAEEKSAV…VANALAHKYH (145 aa). Thr12 carries the post-translational modification Phosphothreonine. A Phosphoserine modification is found at Ser44. Position 59 is an N6-acetyllysine (Lys59). Position 63 (His63) interacts with heme b. The residue at position 82 (Lys82) is an N6-acetyllysine. His92 contributes to the heme b binding site. The residue at position 93 (Cys93) is an S-nitrosocysteine. Position 144 is an N6-acetyllysine (Lys144).

It belongs to the globin family. As to quaternary structure, heterotetramer of two alpha chains and two beta chains. In terms of tissue distribution, red blood cells.

Functionally, involved in oxygen transport from the lung to the various peripheral tissues. This is Hemoglobin subunit beta (HBB) from Meles meles (Eurasian badger).